The primary structure comprises 431 residues: GTPase Obg (431 aa).

Positions Met-1 to Leu-158 constitute an Obg domain. The segment at Gly-125 to Pro-145 is disordered. The OBG-type G domain occupies Ala-159–Ala-335. GTP contacts are provided by residues Gly-165–Ser-172, Phe-190–Val-194, Asp-212–Gly-215, Asn-282–Asp-285, and Ser-316–Leu-318. Mg(2+) contacts are provided by Ser-172 and Thr-192. The region spanning Tyr-353–Ala-431 is the OCT domain.

Belongs to the TRAFAC class OBG-HflX-like GTPase superfamily. OBG GTPase family. Monomer. Mg(2+) is required as a cofactor.

The protein resides in the cytoplasm. Functionally, an essential GTPase which binds GTP, GDP and possibly (p)ppGpp with moderate affinity, with high nucleotide exchange rates and a fairly low GTP hydrolysis rate. Plays a role in control of the cell cycle, stress response, ribosome biogenesis and in those bacteria that undergo differentiation, in morphogenesis control. This chain is GTPase Obg, found in Levilactobacillus brevis (strain ATCC 367 / BCRC 12310 / CIP 105137 / JCM 1170 / LMG 11437 / NCIMB 947 / NCTC 947) (Lactobacillus brevis).